The following is a 224-amino-acid chain: 7-cyano-7-deazaguanine synthase 1 (224 aa).

ATP is bound at residue 10–20; that stretch reads LSGGLDSMVCA. Zn(2+) is bound by residues Cys189, Cys199, Cys202, and Cys205.

This sequence belongs to the QueC family. Zn(2+) is required as a cofactor.

It catalyses the reaction 7-carboxy-7-deazaguanine + NH4(+) + ATP = 7-cyano-7-deazaguanine + ADP + phosphate + H2O + H(+). It participates in purine metabolism; 7-cyano-7-deazaguanine biosynthesis. Its function is as follows. Catalyzes the ATP-dependent conversion of 7-carboxy-7-deazaguanine (CDG) to 7-cyano-7-deazaguanine (preQ(0)). The sequence is that of 7-cyano-7-deazaguanine synthase 1 from Sphingopyxis alaskensis (strain DSM 13593 / LMG 18877 / RB2256) (Sphingomonas alaskensis).